Consider the following 196-residue polypeptide: MKPRTLVELSKLGLGNETVVQLRTLELPVDYREAKRRVTGIWEDHQPQLVVHVGMDTAAKAIILEQSGKNQGYRDADIRSFWPEGGVCLPGSPDVLESGVCMKAVCKRVAVEGVDVIFSRDAGRYVCDYTYYLSLHHGKGCAALIHVPPLSRGLPASLLGRALRVIIQEMLEEVGKPKHRAQFEENSTMVLPAKGN.

Residues glutamate 65, cysteine 127, and histidine 146 contribute to the active site.

It belongs to the peptidase C15 family.

This chain is Pyroglutamyl-peptidase 1-like protein (PGPEP1L), found in Homo sapiens (Human).